The sequence spans 351 residues: Succinylglutamate desuccinylase (351 aa).

Residues H73, E76, and H168 each contribute to the Zn(2+) site. E231 is an active-site residue.

Belongs to the AspA/AstE family. Succinylglutamate desuccinylase subfamily. Zn(2+) serves as cofactor.

The catalysed reaction is N-succinyl-L-glutamate + H2O = L-glutamate + succinate. The protein operates within amino-acid degradation; L-arginine degradation via AST pathway; L-glutamate and succinate from L-arginine: step 5/5. In terms of biological role, transforms N(2)-succinylglutamate into succinate and glutamate. This is Succinylglutamate desuccinylase from Burkholderia lata (strain ATCC 17760 / DSM 23089 / LMG 22485 / NCIMB 9086 / R18194 / 383).